A 61-amino-acid polypeptide reads, in one-letter code: Small ribosomal subunit protein uS14B (61 aa).

Zn(2+) is bound by residues C24, C27, C40, and C43.

It belongs to the universal ribosomal protein uS14 family. Zinc-binding uS14 subfamily. In terms of assembly, part of the 30S ribosomal subunit. Contacts proteins S3 and S10. Zn(2+) serves as cofactor.

Binds 16S rRNA, required for the assembly of 30S particles and may also be responsible for determining the conformation of the 16S rRNA at the A site. In Bacillus velezensis (strain DSM 23117 / BGSC 10A6 / LMG 26770 / FZB42) (Bacillus amyloliquefaciens subsp. plantarum), this protein is Small ribosomal subunit protein uS14B.